Here is a 147-residue protein sequence, read N- to C-terminus: Small ribosomal subunit protein uS12 (147 aa).

Belongs to the universal ribosomal protein uS12 family. As to quaternary structure, part of the 30S ribosomal subunit.

Its function is as follows. With S4 and S5 plays an important role in translational accuracy. Located at the interface of the 30S and 50S subunits. In Methanococcus maripaludis (strain DSM 14266 / JCM 13030 / NBRC 101832 / S2 / LL), this protein is Small ribosomal subunit protein uS12.